Here is a 299-residue protein sequence, read N- to C-terminus: Mitochondrial 2-oxodicarboxylate carrier (299 aa).

Solcar repeat units lie at residues 11–100 (NEAS…YKKL), 107–196 (SPAL…VKNI), and 205–294 (LEFL…TYSW). Helical transmembrane passes span 17–37 (ILAG…LDVV), 62–82 (MIFR…PILA), 100–120 (LLGY…LGSG), 179–199 (HGVF…IIPV), 211–231 (FGIG…FDVA), and 274–290 (IMRL…VYEY).

The protein belongs to the mitochondrial carrier (TC 2.A.29) family.

The protein resides in the mitochondrion inner membrane. It catalyses the reaction 2-oxoadipate(in) + 2-oxoglutarate(out) = 2-oxoadipate(out) + 2-oxoglutarate(in). The enzyme catalyses hexanedioate(in) + 2-oxoglutarate(out) = hexanedioate(out) + 2-oxoglutarate(in). The catalysed reaction is L-2-aminoadipate(in) + 2-oxoglutarate(out) = L-2-aminoadipate(out) + 2-oxoglutarate(in). It carries out the reaction glutarate(in) + 2-oxoglutarate(out) = glutarate(out) + 2-oxoglutarate(in). It catalyses the reaction 2-oxoheptanedioate(in) + 2-oxoglutarate(out) = 2-oxoheptanedioate(out) + 2-oxoglutarate(in). The enzyme catalyses heptanedioate(in) + 2-oxoglutarate(out) = heptanedioate(out) + 2-oxoglutarate(in). The catalysed reaction is citrate(in) + 2-oxoglutarate(out) = citrate(out) + 2-oxoglutarate(in). Its function is as follows. Transports dicarboxylates across the inner membranes of mitochondria by a counter-exchange mechanism. Can transport 2-oxoadipate (2-oxohexanedioate), 2-oxoglutarate, adipate (hexanedioate), glutarate, and to a lesser extent, pimelate (heptanedioate), 2-oxopimelate (2-oxoheptanedioate), 2-aminoadipate (2-aminohexanedioate), oxaloacetate, and citrate. Plays a central role in catabolism of lysine, hydroxylysine, and tryptophan, by transporting common metabolite intermediates (such as 2-oxoadipate) into the mitochondria, where it is converted into acetyl-CoA and can enter the citric acid (TCA) cycle. This chain is Mitochondrial 2-oxodicarboxylate carrier (SLC25A21), found in Bos taurus (Bovine).